Consider the following 457-residue polypeptide: UDP-glucosyltransferase 45 (457 aa).

Catalysis depends on His-21, which acts as the Proton acceptor. His-21 provides a ligand contact to an anthocyanidin. The active-site Charge relay is the Asp-112. Thr-134, Gln-336, His-351, Trp-354, Asn-355, Ser-356, Glu-359, Asp-375, and Gln-376 together coordinate UDP-alpha-D-glucose.

The protein belongs to the UDP-glycosyltransferase family.

It carries out the reaction (20S)-protopanaxadiol + UDP-alpha-D-glucose = (20S)-ginsenoside Rh2 + UDP + H(+). It functions in the pathway secondary metabolite biosynthesis; terpenoid biosynthesis. Component of the triterpene saponins (e.g. PPD-type ginsenosides) biosynthetic pathway. Glycosyltransferase that catalyzes the biosynthesis of ginsenoside Rh2 from protopanaxadiol (PPD). In Panax ginseng (Korean ginseng), this protein is UDP-glucosyltransferase 45.